A 512-amino-acid polypeptide reads, in one-letter code: tRNA-2-methylthio-N(6)-dimethylallyladenosine synthase (512 aa).

The interval 1-22 (MVAHDAAAGVTGEGAGPPVRRA) is disordered. The MTTase N-terminal domain maps to 25–141 (RTYQVRTYGC…LPTLLERARH (117 aa)). [4Fe-4S] cluster-binding residues include Cys34, Cys70, Cys104, Cys178, Cys182, and Cys185. Residues 164–400 (RESAYAAWVS…IALQEQISLE (237 aa)) form the Radical SAM core domain. Positions 403 to 471 (RALVGQAVEV…PHHLIADAGV (69 aa)) constitute a TRAM domain.

It belongs to the methylthiotransferase family. MiaB subfamily. In terms of assembly, monomer. [4Fe-4S] cluster serves as cofactor.

Its subcellular location is the cytoplasm. It carries out the reaction N(6)-dimethylallyladenosine(37) in tRNA + (sulfur carrier)-SH + AH2 + 2 S-adenosyl-L-methionine = 2-methylsulfanyl-N(6)-dimethylallyladenosine(37) in tRNA + (sulfur carrier)-H + 5'-deoxyadenosine + L-methionine + A + S-adenosyl-L-homocysteine + 2 H(+). Its function is as follows. Catalyzes the methylthiolation of N6-(dimethylallyl)adenosine (i(6)A), leading to the formation of 2-methylthio-N6-(dimethylallyl)adenosine (ms(2)i(6)A) at position 37 in tRNAs that read codons beginning with uridine. This is tRNA-2-methylthio-N(6)-dimethylallyladenosine synthase from Mycobacterium bovis (strain ATCC BAA-935 / AF2122/97).